Reading from the N-terminus, the 545-residue chain is E3 ubiquitin-protein ligase ipaH9.8 (545 aa).

The interval 1–242 is interaction with target proteins; the sequence is MLPINNNFSL…YHGPRIYFSM (242 aa). LRR repeat units lie at residues 57-77, 78-99, 100-117, 118-139, 140-157, 158-179, 182-203, and 205-228; these read NSDE…NLPA, QITL…PVTL, KKLY…VLPP, ALES…PDSL, LTMN…SLPQ, ALKN…SEGN, VVRE…ILNL, and NECS…QRLT. The interval 243–250 is linker; it reads SDGQQNTL. Residues 251–545 are E3 ubiquitin-protein ligase catalytic domain; it reads HRPLADAVTA…SENGSQLHHS (295 aa). Residues 253-545 form the NEL domain; it reads PLADAVTAWF…SENGSQLHHS (293 aa). Residue C337 is the Glycyl thioester intermediate of the active site.

Belongs to the LRR-containing bacterial E3 ligase family. Also interacts with human and mouse U2AF1 (U2AF35). Ubiquitinated in the presence of host E1 ubiquitin-activating enzyme, E2 ubiquitin-conjugating enzyme and ubiquitin.

It localises to the secreted. It is found in the host cytoplasm. The protein resides in the host nucleus. It carries out the reaction S-ubiquitinyl-[E2 ubiquitin-conjugating enzyme]-L-cysteine + [acceptor protein]-L-lysine = [E2 ubiquitin-conjugating enzyme]-L-cysteine + N(6)-ubiquitinyl-[acceptor protein]-L-lysine.. Its activity is regulated as follows. Exists in an autoinhibited state in the absence of substrate protein, due to interactions of the leucine-rich repeats with NEL domain. Is activated upon binding to a substrate protein. Functionally, effector E3 ubiquitin ligase that interferes with host's ubiquitination pathway and modulates the acute inflammatory responses, thus facilitating bacterial colonization within the host cell. Interacts with IKBKG (NEMO) and TNIP1 (ABIN-1), a ubiquitin-binding adapter protein, which results in TNIP1-dependent 'Lys-27'-linked polyubiquitination of IKBKG. Consequently, polyubiquitinated IKBKG undergoes proteasome-dependent degradation, which perturbs NF-kappa-B activation during bacterial infection. Mediates polyubiquitination of host U2AF1, leading to its proteasomal degradation. Catalyzes 'Lys-48'-linked polyubiquitination and subsequent degradation of a subset of host guanylate-binding proteins (GBP1, GBP2, GBP4 and GBP6), thereby suppressing host cell defense. In contrast, host GBP3 and GBP7 are not ubiquitinated by IpaH9.8. Uses UBE2D2 (UBCH5B) as an E2 ubiquitin-conjugating enzyme. This Shigella sonnei (strain Ss046) protein is E3 ubiquitin-protein ligase ipaH9.8 (ipaH9.8).